The following is a 444-amino-acid chain: Ribosomal protein uS12 methylthiotransferase RimO (444 aa).

Residues 4–118 enclose the MTTase N-terminal domain; the sequence is YKIGLISLGC…IQNYIDDFFN (115 aa). The [4Fe-4S] cluster site is built by C13, C48, C81, C155, C159, and C162. The region spanning 141–371 is the Radical SAM core domain; it reads TTAKHMAYIR…MSIQQNVSSK (231 aa). Residues 374–440 enclose the TRAM domain; that stretch reads KNKLEKVYKV…EYDLIGVVCD (67 aa).

This sequence belongs to the methylthiotransferase family. RimO subfamily. Requires [4Fe-4S] cluster as cofactor.

It localises to the cytoplasm. The enzyme catalyses L-aspartate(89)-[ribosomal protein uS12]-hydrogen + (sulfur carrier)-SH + AH2 + 2 S-adenosyl-L-methionine = 3-methylsulfanyl-L-aspartate(89)-[ribosomal protein uS12]-hydrogen + (sulfur carrier)-H + 5'-deoxyadenosine + L-methionine + A + S-adenosyl-L-homocysteine + 2 H(+). Its function is as follows. Catalyzes the methylthiolation of an aspartic acid residue of ribosomal protein uS12. The chain is Ribosomal protein uS12 methylthiotransferase RimO from Clostridium novyi (strain NT).